Consider the following 628-residue polypeptide: 1-deoxy-D-xylulose-5-phosphate synthase (628 aa).

Residues histidine 72 and 113 to 115 (GHA) each bind thiamine diphosphate. Aspartate 144 lines the Mg(2+) pocket. Thiamine diphosphate-binding positions include 145-146 (GA), asparagine 174, tyrosine 287, and glutamate 370. Asparagine 174 is a binding site for Mg(2+).

Belongs to the transketolase family. DXPS subfamily. Homodimer. Requires Mg(2+) as cofactor. Thiamine diphosphate is required as a cofactor.

It catalyses the reaction D-glyceraldehyde 3-phosphate + pyruvate + H(+) = 1-deoxy-D-xylulose 5-phosphate + CO2. Its pathway is metabolic intermediate biosynthesis; 1-deoxy-D-xylulose 5-phosphate biosynthesis; 1-deoxy-D-xylulose 5-phosphate from D-glyceraldehyde 3-phosphate and pyruvate: step 1/1. Functionally, catalyzes the acyloin condensation reaction between C atoms 2 and 3 of pyruvate and glyceraldehyde 3-phosphate to yield 1-deoxy-D-xylulose-5-phosphate (DXP). The chain is 1-deoxy-D-xylulose-5-phosphate synthase from Prochlorococcus marinus (strain NATL2A).